A 306-amino-acid polypeptide reads, in one-letter code: MLNYVLKRLLGLIPTLLIVAVLVFLFVHLLPGDPARLIAGPEADAQVIALVRQQLGLDQPLHVQFWHYITHVLQGDFGTSMVSRRPVSEEIASRFLPTLWLTITSMIWAVLFGMAIGIAAAVWRNRWPDRLGMTLAVTGISFPAFALGMLLMQIFSVDLGWLPTVGADSWQHYILPSLTLGAAVASVMARFTRSSFVDVLSEDYMRTARAKGVSETWVVLKHGLRNAMIPVVTMMGLQFGFLLGGSIVVEKVFNWPGLGRLLVDSVDMRDYPVIQAEVLLFSLEFILINLVVDVLYAAINPAIRYK.

The Cytoplasmic segment spans residues 1–8 (MLNYVLKR). The helical transmembrane segment at 9–29 (LLGLIPTLLIVAVLVFLFVHL) threads the bilayer. Over 30 to 102 (LPGDPARLIA…SRFLPTLWLT (73 aa)) the chain is Periplasmic. The region spanning 95-292 (FLPTLWLTIT…LEFILINLVV (198 aa)) is the ABC transmembrane type-1 domain. A helical transmembrane segment spans residues 103 to 123 (ITSMIWAVLFGMAIGIAAAVW). Topologically, residues 124–134 (RNRWPDRLGMT) are cytoplasmic. Residues 135–155 (LAVTGISFPAFALGMLLMQIF) traverse the membrane as a helical segment. Residues 156–168 (SVDLGWLPTVGAD) are Periplasmic-facing. A helical membrane pass occupies residues 169 to 189 (SWQHYILPSLTLGAAVASVMA). Residues 190-228 (RFTRSSFVDVLSEDYMRTARAKGVSETWVVLKHGLRNAM) are Cytoplasmic-facing. Residues 229 to 249 (IPVVTMMGLQFGFLLGGSIVV) traverse the membrane as a helical segment. Residues 250–278 (EKVFNWPGLGRLLVDSVDMRDYPVIQAEV) are Periplasmic-facing. A helical membrane pass occupies residues 279–299 (LLFSLEFILINLVVDVLYAAI). Over 300 to 306 (NPAIRYK) the chain is Cytoplasmic.

The protein belongs to the binding-protein-dependent transport system permease family. In terms of assembly, the complex is composed of two ATP-binding proteins (GsiA), two transmembrane proteins (GsiC and GsiD) and a solute-binding protein (GsiB).

The protein localises to the cell inner membrane. Part of the ABC transporter complex GsiABCD involved in glutathione import. Probably responsible for the translocation of the substrate across the membrane. The sequence is that of Glutathione transport system permease protein GsiC from Salmonella typhimurium (strain LT2 / SGSC1412 / ATCC 700720).